Consider the following 149-residue polypeptide: Urease accessory protein UreE (149 aa).

It belongs to the UreE family.

It is found in the cytoplasm. Its function is as follows. Involved in urease metallocenter assembly. Binds nickel. Probably functions as a nickel donor during metallocenter assembly. In Ruegeria pomeroyi (strain ATCC 700808 / DSM 15171 / DSS-3) (Silicibacter pomeroyi), this protein is Urease accessory protein UreE.